Reading from the N-terminus, the 489-residue chain is MLKVKNYEFWFITGSQHLYGPEVIEQVSDNSKIIVDELNKKDLPYKIVFKTVATDSPSIRKVCNDANNDENCAGIITWMHTFSPAKMWIHGLTELRKPLLHLHTQFNKEIPWGTIDMDFMNLNQAAHGDREFGYIGARLDIARKIVVGHWTDASVSADIAKWMAPAVAFTEGHSIKVARFGDNMRNVAVTDGDRIEAQIKFGWIVDYYGVGDLVKSMDAVTEDQIDELMAEYSKLYDIDPKASIDSIREQAKIEIGLRTFLDARGYTAFTTNFEALHGMKQLPGLAVQHLMAEGYGFGAEGDWKTAALLRAMKIMASGKGTGLMEDYTYNMDSENGLILGAHMLEICPTLAATKPVIEVHPLGIGGKEDPARLVFKGASGPAVAASLIDMGNRFRLIVNSVDCVEVTEDMPNLPVASVLWKPQPSLKEGAKAWIMAGGAHHTSFSFYVDEEQLLDWADMVGVECVVINNDTKLSTFKNELKFSSTAWKF.

Residues Glu-300, Glu-325, His-342, and His-441 each contribute to the Mn(2+) site.

The protein belongs to the arabinose isomerase family. Mn(2+) serves as cofactor.

It carries out the reaction beta-L-arabinopyranose = L-ribulose. It functions in the pathway carbohydrate degradation; L-arabinose degradation via L-ribulose; D-xylulose 5-phosphate from L-arabinose (bacterial route): step 1/3. Functionally, catalyzes the conversion of L-arabinose to L-ribulose. The chain is L-arabinose isomerase from Clostridium beijerinckii (strain ATCC 51743 / NCIMB 8052) (Clostridium acetobutylicum).